Reading from the N-terminus, the 310-residue chain is Zinc finger protein unc-98 (310 aa).

Residues 73 to 84 (GSSSAQTPTKSS) are compositionally biased toward polar residues. The tract at residues 73 to 102 (GSSSAQTPTKSSGGALDGSDQQEVRQDGTS) is disordered. 2 C2H2-type zinc fingers span residues 113–135 (YKCR…ERIH) and 141–163 (YVCG…AAQH). The C2H2-type 3; degenerate zinc finger occupies 169–188 (YKCECGRTFFSYTEMLYHKH). The interaction with myo-3 stretch occupies residues 198 to 310 (APETTTIKVS…RTSGYVTPRF (113 aa)). The C2H2-type 4 zinc finger occupies 246-268 (YICEYCSKSYSDSRGLAYHMYSH).

As to quaternary structure, interacts with hum-6, mep-1, myo-3, unc-96 and unc-97/PINCH. Expressed in embryos from 1.5- to 2-fold stage in myofibrils. In larvae and adults, it is expressed in body wall muscle, and in addition, anal depressor muscle and vulval muscles. More specifically it is found in the thick filaments of muscle fibers.

It localises to the nucleus. Its subcellular location is the cytoplasm. In terms of biological role, probable transcription factor required for muscle structure. Its dual subcellular localization suggests that it may function both as a muscle adhesion complex protein and as a transcription factor, or work together with transcription factors, to influence gene expression. Thought to act as a molecular bridge between unc-97 and myo-3 at the M-line of muscles, possibly in a signaling role. Plays a role in the formation of muscle connections, also called muscle arm extensions, between the body wall and the motor axons in the dorsal and ventral cord. The chain is Zinc finger protein unc-98 (unc-98) from Caenorhabditis elegans.